A 432-amino-acid chain; its full sequence is MQRTCVLIVLIVTSTMWTPDPDVYAQPRGFNYDEAQVPKYTLPDPLVMVDGTKVTSAKQWNDKRRDEVQQLFEAYMYGKVPDGETELIFTDAKGERALGGAAIRKQVKISFGEKEDAPAMDLLIYLPADAKVRVPVFLGLNFHGNHTIHKDKEIWLTESWVRTNKKFGITKNKANELSRGVAAGRWQIEKAIAKGYGVATIYCGDIDPDFNFPSNGIQAYYYKKDQTIPEKGQWGTIAAWAFGLSCAMDYFETDTDIDHKKVAVLGHSRLGKTSLWAGAIDTRFALTISNCSGCGGAALSRRRFGETVRRINTSFPHWFCSRFHQYNDKEDKLPIDQHMLIALCAPRPVLINSATEDKWADPHGEFLAAQGADAVYRMLGTGGLDAKKWPEPNKLVKSTIGYHLRPGKHDVTARDWDVYIEFADHHMTGGAE.

A signal peptide spans 1–25; that stretch reads MQRTCVLIVLIVTSTMWTPDPDVYA. The short motif at 266-271 is the GXSYXG catalytic site motif element; sequence GHSRLG. Ser268 functions as the Nucleophile in the catalytic mechanism. Residues Lys272 and Trp359 each contribute to the substrate site. Residue His409 is the Charge relay system of the active site.

Belongs to the carbohydrate esterase 15 (CE15) family. The cofactor is Does not require metal ions for activity..

The protein localises to the periplasm. With respect to regulation, is inhibited by PMSF and by NaF in vitro, which is consistent with the catalytic nucleophile being a serine. Displays some glucuronoyl esterase activity in vitro, since it is able to hydrolyze methyl 4-O-methyl-D-glucopyranosyluronate, allyl D-glucuronate, benzyl D-glucuronate and D-glucuronic acid methyl ester. However, esters of glucuronic acid are probably not its biological substrate, as they are not present in the marine environment. Can also hydrolyze a range of other esters, including p-nitrophenyl acetate. More likely biologically-relevant substrates for MZ0003 and other marine bacterial CE15s are algal cell wall polysaccharides, as these would be readily available in this environment and could be used as energy sources. The sequence is that of Carbohydrate esterase MZ0003 from Unknown prokaryotic organism.